The sequence spans 543 residues: ADP,ATP carrier protein 3 (543 aa).

A run of 10 helical transmembrane segments spans residues 46–66 (VLYLSLLFGVITMVHTIMGNL), 86–106 (IFLPPCSLLFIWAIQLGLSLF), 111–131 (MFDITLILFSGCYILFGLVVW), 175–195 (FLFLCSEMWGALVVSYFFNIF), 209–229 (ISVYNISNAISIFLSAVLTLV), 243–263 (ELGFRILILVLGSTVIGILAL), 306–326 (LLIAISLNVLLYGVTSTLVEA), 346–366 (FANFYNGLEQIIIAISLLVVI), 382–402 (LASLPIVIAMFSLFSVFLIAF), and 504–524 (SVSGILIVIIIAMWYFILKYL).

It belongs to the ADP/ATP translocase tlc family.

It is found in the mitosome membrane. Its function is as follows. ATP transporter involved in the uptake of ATP from the parasite cell cytoplasm into the mitosome matrix. Equilibrates nucleotide pools across a concentration gradient between both sides of the mitosome membrane. The polypeptide is ADP,ATP carrier protein 3 (NTT3) (Encephalitozoon cuniculi (strain GB-M1) (Microsporidian parasite)).